Here is a 26-residue protein sequence, read N- to C-terminus: Maculatin-3.1 (26 aa).

Alanine amide is present on A26.

As to expression, expressed by the skin dorsal glands.

The protein localises to the secreted. Its function is as follows. Shows antibacterial activity against S.uberis. The chain is Maculatin-3.1 from Ranoidea genimaculata (Brown-spotted tree frog).